The following is a 424-amino-acid chain: Deoxyguanosinetriphosphate triphosphohydrolase-like protein (424 aa).

The disordered stretch occupies residues 1–27 (MYPYSDADAFRRQPERAKSSQLRTSAV). Positions 8–18 (DAFRRQPERAK) are enriched in basic and acidic residues. An HD domain is found at 67 to 217 (RLTHSLEVAQ…MDFSDDIAYS (151 aa)).

Belongs to the dGTPase family. Type 2 subfamily.

The chain is Deoxyguanosinetriphosphate triphosphohydrolase-like protein (dgt) from Corynebacterium glutamicum (strain ATCC 13032 / DSM 20300 / JCM 1318 / BCRC 11384 / CCUG 27702 / LMG 3730 / NBRC 12168 / NCIMB 10025 / NRRL B-2784 / 534).